Here is a 239-residue protein sequence, read N- to C-terminus: MKVIVTENKIQGSAKAFEIFEKGIKNGAKVLGLATGSTPEILYQNWVKSDLNCDDLTSINLDEYVGLTPDNPQSYHYFMQKHLFDKKTFKKTYIPDGMTKDVPAYCKEYDQIIKDNPIDIQLLGIGQNGHIAFNEPGTPFDIGTHEVKLTENTIKANARFFDNEDEVPKSAICMGTANIMDSKKIVLMAFGEKKAKAIKEMIEGPITEEVPASILQKHPDVTVIVDTYAAQELDDKYKN.

The active-site Proton acceptor; for enolization step is Asp62. The active-site For ring-opening step is the Asn128. Residue His130 is the Proton acceptor; for ring-opening step of the active site. Glu135 functions as the For ring-opening step in the catalytic mechanism.

It belongs to the glucosamine/galactosamine-6-phosphate isomerase family. NagB subfamily.

It carries out the reaction alpha-D-glucosamine 6-phosphate + H2O = beta-D-fructose 6-phosphate + NH4(+). It functions in the pathway amino-sugar metabolism; N-acetylneuraminate degradation; D-fructose 6-phosphate from N-acetylneuraminate: step 5/5. Its function is as follows. Catalyzes the reversible isomerization-deamination of glucosamine 6-phosphate (GlcN6P) to form fructose 6-phosphate (Fru6P) and ammonium ion. This Lactobacillus acidophilus (strain ATCC 700396 / NCK56 / N2 / NCFM) protein is Glucosamine-6-phosphate deaminase.